Here is a 261-residue protein sequence, read N- to C-terminus: Thiazole synthase (261 aa).

The Schiff-base intermediate with DXP role is filled by Lys102. 1-deoxy-D-xylulose 5-phosphate contacts are provided by residues Gly163, 189-190 (AG), and 211-212 (NT).

It belongs to the ThiG family. Homotetramer. Forms heterodimers with either ThiH or ThiS.

Its subcellular location is the cytoplasm. It catalyses the reaction [ThiS sulfur-carrier protein]-C-terminal-Gly-aminoethanethioate + 2-iminoacetate + 1-deoxy-D-xylulose 5-phosphate = [ThiS sulfur-carrier protein]-C-terminal Gly-Gly + 2-[(2R,5Z)-2-carboxy-4-methylthiazol-5(2H)-ylidene]ethyl phosphate + 2 H2O + H(+). It functions in the pathway cofactor biosynthesis; thiamine diphosphate biosynthesis. Its function is as follows. Catalyzes the rearrangement of 1-deoxy-D-xylulose 5-phosphate (DXP) to produce the thiazole phosphate moiety of thiamine. Sulfur is provided by the thiocarboxylate moiety of the carrier protein ThiS. In vitro, sulfur can be provided by H(2)S. The polypeptide is Thiazole synthase (Myxococcus xanthus (strain DK1622)).